The chain runs to 149 residues: uncharacterized protein (149 aa).

This sequence to B.subtilis XkdN.

This is an uncharacterized protein from Bacillus subtilis (strain 168).